Reading from the N-terminus, the 62-residue chain is Photosystem II reaction center protein Z (62 aa).

M1 bears the N-formylmethionine mark. Residues 1–4 (MTIL) lie on the Lumenal side of the membrane. The chain crosses the membrane as a helical span at residues 5–25 (FQLALAALVILSFVMVIGVPV). The Cytoplasmic segment spans residues 26–36 (AYASPQDWDRS). A helical transmembrane segment spans residues 37 to 58 (KQLIFLGSGLWIALVLVVGVLN). The Lumenal segment spans residues 59–62 (FFVV).

This sequence belongs to the PsbZ family. As to quaternary structure, PSII is composed of 1 copy each of membrane proteins PsbA, PsbB, PsbC, PsbD, PsbE, PsbF, PsbH, PsbI, PsbJ, PsbK, PsbL, PsbM, PsbT, PsbX, PsbY, PsbZ, Psb30/Ycf12, peripheral proteins PsbO, CyanoQ (PsbQ), PsbU, PsbV and a large number of cofactors. It forms dimeric complexes. Part of a photosystem II (PSII) assembly intermediate complex PSII-I; crystallized from a strain deleted of psbJ, it forms monomeric PSII before addition of the oxygen evolving complex. PSII-I includes 3 assembly factors not found in mature PSII (Psb27, Psb28 and Psb34). PSII binds multiple chlorophylls, carotenoids and specific lipids. serves as cofactor.

It is found in the cellular thylakoid membrane. In terms of biological role, may control the interaction of photosystem II (PSII) cores with the light-harvesting antenna, regulates electron flow through the 2 photosystem reaction centers. PSII is a light-driven water plastoquinone oxidoreductase, using light energy to abstract electrons from H(2)O, generating a proton gradient subsequently used for ATP formation. Functionally, may also aid in binding of PsbK, Psb30/Ycf12 and the oxygen-evolving complex to PSII, at least in vitro. The sequence is that of Photosystem II reaction center protein Z from Thermosynechococcus vestitus (strain NIES-2133 / IAM M-273 / BP-1).